Consider the following 358-residue polypeptide: Chorismate synthase (358 aa).

Residue Arg-47 participates in NADP(+) binding. Residues 124–126 (RSS), 240–241 (NA), Gly-284, 299–303 (KPVAT), and Arg-325 each bind FMN.

Belongs to the chorismate synthase family. In terms of assembly, homotetramer. FMNH2 serves as cofactor.

It catalyses the reaction 5-O-(1-carboxyvinyl)-3-phosphoshikimate = chorismate + phosphate. It participates in metabolic intermediate biosynthesis; chorismate biosynthesis; chorismate from D-erythrose 4-phosphate and phosphoenolpyruvate: step 7/7. In terms of biological role, catalyzes the anti-1,4-elimination of the C-3 phosphate and the C-6 proR hydrogen from 5-enolpyruvylshikimate-3-phosphate (EPSP) to yield chorismate, which is the branch point compound that serves as the starting substrate for the three terminal pathways of aromatic amino acid biosynthesis. This reaction introduces a second double bond into the aromatic ring system. In Bacteroides fragilis (strain YCH46), this protein is Chorismate synthase.